Consider the following 203-residue polypeptide: Large ribosomal subunit protein bL25 (203 aa).

Belongs to the bacterial ribosomal protein bL25 family. CTC subfamily. Part of the 50S ribosomal subunit; part of the 5S rRNA/L5/L18/L25 subcomplex. Contacts the 5S rRNA. Binds to the 5S rRNA independently of L5 and L18.

Functionally, this is one of the proteins that binds to the 5S RNA in the ribosome where it forms part of the central protuberance. The protein is Large ribosomal subunit protein bL25 of Rickettsia typhi (strain ATCC VR-144 / Wilmington).